The primary structure comprises 713 residues: Calpain-1 catalytic subunit (713 aa).

One can recognise a Calpain catalytic domain in the interval 55–354 (LFQDDAFPPV…FTKLEICNLT (300 aa)). Active-site residues include Cys-115, His-272, and Asn-296. Residue Thr-354 is modified to Phosphothreonine. The segment at 355–525 (PDALKSRTLR…KKAGTQELDD (171 aa)) is domain III. The tract at residues 526–541 (QIQANLPDEKVLSEEE) is linker. The tract at residues 542–712 (IDDNFKTLFS…LFKWLQLTMF (171 aa)) is domain IV. EF-hand domains are found at residues 557 to 575 (DMEI…IISK), 584 to 609 (FSLE…LVEF), 614 to 649 (NRIR…AGFK), and 679 to 713 (VRLE…TMFA). Positions 597, 599, 601, 603, 608, 627, 629, 631, 633, and 638 each coordinate Ca(2+).

The protein belongs to the peptidase C2 family. As to quaternary structure, forms a heterodimer with a small (regulatory) subunit CAPNS1. Ca(2+) serves as cofactor. Post-translationally, undergoes calcium-induced successive autoproteolytic cleavages that generate a membrane-bound 78 kDa active form and an intracellular 75 kDa active form. Calpastatin reduces with high efficiency the transition from 78 kDa to 75 kDa calpain forms.

The protein resides in the cytoplasm. It is found in the cell membrane. It catalyses the reaction Broad endopeptidase specificity.. Activated by micromolar concentrations of calcium and inhibited by calpastatin. Calcium-regulated non-lysosomal thiol-protease which catalyzes limited proteolysis of substrates involved in cytoskeletal remodeling and signal transduction. Proteolytically cleaves CTBP1 at 'Asn-364', 'Gly-377' and 'His-399'. Cleaves and activates caspase-7 (CASP7). The sequence is that of Calpain-1 catalytic subunit from Rattus norvegicus (Rat).